The chain runs to 246 residues: 1-(5-phosphoribosyl)-5-[(5-phosphoribosylamino)methylideneamino] imidazole-4-carboxamide isomerase (246 aa).

D8 functions as the Proton acceptor in the catalytic mechanism. D131 (proton donor) is an active-site residue.

This sequence belongs to the HisA/HisF family.

Its subcellular location is the cytoplasm. The catalysed reaction is 1-(5-phospho-beta-D-ribosyl)-5-[(5-phospho-beta-D-ribosylamino)methylideneamino]imidazole-4-carboxamide = 5-[(5-phospho-1-deoxy-D-ribulos-1-ylimino)methylamino]-1-(5-phospho-beta-D-ribosyl)imidazole-4-carboxamide. It participates in amino-acid biosynthesis; L-histidine biosynthesis; L-histidine from 5-phospho-alpha-D-ribose 1-diphosphate: step 4/9. The polypeptide is 1-(5-phosphoribosyl)-5-[(5-phosphoribosylamino)methylideneamino] imidazole-4-carboxamide isomerase (Delftia acidovorans (strain DSM 14801 / SPH-1)).